A 131-amino-acid chain; its full sequence is Fluoride-specific ion channel FluC 2 (131 aa).

4 helical membrane passes run 5-25 (FGVAVGGALGALARYGVSLLV), 39-59 (LATLLVNVLGSFLLAFITTLA), 70-90 (LAVGTGFIGALTTFSTFAWES), and 104-124 (LYVLGNLVLGYAAVLLGRALA). 2 residues coordinate Na(+): Gly78 and Thr81.

This sequence belongs to the fluoride channel Fluc/FEX (TC 1.A.43) family.

The protein localises to the cell membrane. The catalysed reaction is fluoride(in) = fluoride(out). Its activity is regulated as follows. Na(+) is not transported, but it plays an essential structural role and its presence is essential for fluoride channel function. Fluoride-specific ion channel. Important for reducing fluoride concentration in the cell, thus reducing its toxicity. The protein is Fluoride-specific ion channel FluC 2 of Deinococcus geothermalis (strain DSM 11300 / CIP 105573 / AG-3a).